A 702-amino-acid chain; its full sequence is Ribosomal RNA large subunit methyltransferase K/L (702 aa).

Residues 43 to 154 (LIYQSLMWSR…KETASIALDL (112 aa)) form the THUMP domain.

Belongs to the methyltransferase superfamily. RlmKL family.

Its subcellular location is the cytoplasm. It catalyses the reaction guanosine(2445) in 23S rRNA + S-adenosyl-L-methionine = N(2)-methylguanosine(2445) in 23S rRNA + S-adenosyl-L-homocysteine + H(+). It carries out the reaction guanosine(2069) in 23S rRNA + S-adenosyl-L-methionine = N(2)-methylguanosine(2069) in 23S rRNA + S-adenosyl-L-homocysteine + H(+). Specifically methylates the guanine in position 2445 (m2G2445) and the guanine in position 2069 (m7G2069) of 23S rRNA. In Salmonella typhi, this protein is Ribosomal RNA large subunit methyltransferase K/L.